A 143-amino-acid polypeptide reads, in one-letter code: Deoxyuridine 5'-triphosphate nucleotidohydrolase (143 aa).

Residues Arg-63–Gly-65, Asn-76, Thr-80–Asp-82, and Lys-90 contribute to the substrate site.

It belongs to the dUTPase family. The cofactor is Mg(2+).

It catalyses the reaction dUTP + H2O = dUMP + diphosphate + H(+). The protein operates within pyrimidine metabolism; dUMP biosynthesis; dUMP from dCTP (dUTP route): step 2/2. Its function is as follows. This enzyme is involved in nucleotide metabolism: it produces dUMP, the immediate precursor of thymidine nucleotides and it decreases the intracellular concentration of dUTP so that uracil cannot be incorporated into DNA. This chain is Deoxyuridine 5'-triphosphate nucleotidohydrolase, found in Clostridioides difficile (Peptoclostridium difficile).